The chain runs to 533 residues: uncharacterized protein (533 aa).

4 stretches are compositionally biased toward polar residues: residues 30–43 (SQQG…VKNH), 79–91 (NAGT…THLS), 231–247 (NVKS…SSSA), and 254–263 (GRQSNSPNSN). 2 disordered regions span residues 30–92 (SQQG…HLSA) and 221–274 (SLSP…PGAS). Residue serine 336 is modified to Phosphoserine. The segment at 475–510 (HPSLSNSAASPPVSSPGLRRSHIPVHEGLKHTRDGV) is disordered. Residues 476 to 490 (PSLSNSAASPPVSSP) are compositionally biased toward low complexity. Residues 498 to 510 (PVHEGLKHTRDGV) show a composition bias toward basic and acidic residues.

Its subcellular location is the nucleus. This is an uncharacterized protein from Schizosaccharomyces pombe (strain 972 / ATCC 24843) (Fission yeast).